The primary structure comprises 504 residues: L-carnitine/gamma-butyrobetaine antiporter (504 aa).

12 helical membrane-spanning segments follow: residues Ile-10–Val-30, Trp-51–Phe-71, Ile-92–Ile-112, Gly-143–Val-163, Phe-195–Val-215, Leu-231–Leu-251, Ser-263–Met-283, Trp-316–Ala-336, Leu-347–Gly-367, Trp-398–Ala-418, Leu-446–Leu-466, and Ala-475–Ile-495.

Belongs to the BCCT transporter (TC 2.A.15) family. CaiT subfamily. In terms of assembly, homotrimer.

The protein localises to the cell inner membrane. It catalyses the reaction 4-(trimethylamino)butanoate(in) + (R)-carnitine(out) = 4-(trimethylamino)butanoate(out) + (R)-carnitine(in). The protein operates within amine and polyamine metabolism; carnitine metabolism. Functionally, catalyzes the exchange of L-carnitine for gamma-butyrobetaine. This chain is L-carnitine/gamma-butyrobetaine antiporter, found in Escherichia coli (strain K12 / MC4100 / BW2952).